Here is a 452-residue protein sequence, read N- to C-terminus: Adenylyltransferase and sulfurtransferase MOCS3 (452 aa).

Residues glycine 99, aspartate 120, serine 127–arginine 131, lysine 144, and aspartate 188–asparagine 189 each bind ATP. Zn(2+)-binding residues include cysteine 230 and cysteine 233. Cysteine 247 serves as the catalytic Glycyl thioester intermediate; for adenylyltransferase activity. Zn(2+) is bound by residues cysteine 305 and cysteine 308. One can recognise a Rhodanese domain in the interval lysine 354–proline 450. The Cysteine persulfide intermediate; for sulfurtransferase activity role is filled by cysteine 409.

It in the N-terminal section; belongs to the HesA/MoeB/ThiF family. UBA4 subfamily. It depends on Zn(2+) as a cofactor.

It localises to the cytoplasm. The protein localises to the cytosol. It carries out the reaction [molybdopterin-synthase sulfur-carrier protein]-C-terminal Gly-Gly + ATP + H(+) = [molybdopterin-synthase sulfur-carrier protein]-C-terminal Gly-Gly-AMP + diphosphate. It catalyses the reaction [molybdopterin-synthase sulfur-carrier protein]-C-terminal Gly-Gly-AMP + S-sulfanyl-L-cysteinyl-[cysteine desulfurase] + AH2 = [molybdopterin-synthase sulfur-carrier protein]-C-terminal-Gly-aminoethanethioate + L-cysteinyl-[cysteine desulfurase] + A + AMP + 2 H(+). It participates in tRNA modification; 5-methoxycarbonylmethyl-2-thiouridine-tRNA biosynthesis. It functions in the pathway cofactor biosynthesis; molybdopterin biosynthesis. Plays a central role in 2-thiolation of mcm(5)S(2)U at tRNA wobble positions of cytosolic tRNA(Lys), tRNA(Glu) and tRNA(Gln). Also essential during biosynthesis of the molybdenum cofactor. Acts by mediating the C-terminal thiocarboxylation of sulfur carriers URM1 and MOCS2A. Its N-terminus first activates URM1 and MOCS2A as acyl-adenylates (-COAMP), then the persulfide sulfur on the catalytic cysteine is transferred to URM1 and MOCS2A to form thiocarboxylation (-COSH) of their C-terminus. The reaction probably involves hydrogen sulfide that is generated from the persulfide intermediate and that acts as a nucleophile towards URM1 and MOCS2A. Subsequently, a transient disulfide bond is formed. Does not use thiosulfate as sulfur donor; NFS1 probably acting as a sulfur donor for thiocarboxylation reactions. This chain is Adenylyltransferase and sulfurtransferase MOCS3, found in Drosophila virilis (Fruit fly).